Reading from the N-terminus, the 1894-residue chain is MAPEAGATLRAPRRLSWAALLLLAALLPVASSAAASVDHPLKPRHVKLLSTKMGLKVTWDPPKDATSRPVEHYNIAYGKSLKSLKYIKVNAETYSFLIEDVEPGVVYFVLLTAENHSGVSRPVYRAESPPGGEWIEIDGFPIKGPGPFNETVTEKEVPNKPLRVRVRSSDDRLSVAWKAPRLSGAKSPRRSRGFLLGYGESGRKMNYVPLTRDERTHEIKKLASESVYVVSLQSMNSQGRSQPVYRAALTKRKISEEDELDVPDDISVRVMSSQSVLVSWVDPVLEKQKKVVASRQYTVRYREKGELARWDYKQIANRRVLIENLIPDTVYEFAVRISQGERDGKWSTSVFQRTPESAPTTAPENLNVWPVNGKPTVVAASWDALPETEGKVKEYILSYAPALKPFGAKSLTYPGDTTSALVDGLQPGERYLFKIRATNRRGLGPHSKAFIVAMPTTSKADVEQNTEDNGKPEKPEPSSPSPRAPASSQHPSVPASPQGRNAKDLLLDLKNKILANGGAPRKPQLRAKKAEELDLQSTEITGEEELGSREDSPMSPSDTQDQKRTLRPPSRHGHSVVAPGRTAVRARMPALPRREGVDKPGFSLATQPRPGAPPSASASPAHHASTQGTSHRPSLPASLNDNDLVDSDEDERAVGSLHPKGAFAQPRPALSPSRQSPSSVLRDRSSVHPGAKPASPARRTPHSGAAEEDSSASAPPSRLSPPHGGSSRLLPTQPHLSSPLSKGGKDGEDAPATNSNAPSRSTMSSSVSSHLSSRTQVSEGAEASDGESHGDGDREDGGRQAEATAQTLRARPASGHFHLLRHKPFAANGRSPSRFSIGRGPRLQPSSSPQSTVPSRAHPRVPSHSDSHPKLSSGIHGDEEDEKPLPATVVNDHVPSSSRQPISRGWEDLRRSPQRGASLHRKEPIPENPKSTGADTHPQGKYSSLASKAQDVQQSTDADTEGHSPKAQPGSTDRHASPARPPAARSQQHPSVPRRMTPGRAPQQQPPPPVATSQHHPGPQSRDAGRSPSQPRLSLTQAGRPRPTSQGRSHSSSDPYTASSRGMLPTALQNQDEDAQGSYDDDSTEVEAQDVRAPAHAARAKEAAASLPKHQQVESPTGAGAGGDHRSQRGHAASPARPSRPGGPQSRARVPSRAAPGKSEPPSKRPLSSKSQQSVSAEDDEEEDAGFFKGGKEDLLSSSVPKWPSSSTPRGGKDADGSLAKEEREPAIALAPRGGSLAPVKRPLPPPPGSSPRASHVPSRLPPRSAATVSPVAGTHPWPQYTTRAPPGHFSTTPMLSLRQRMMHARFRNPLSRQPARPSYRQGYNGRPNVEGKVLPGSNGKPNGQRIINGPQGTKWVVDLDRGLVLNAEGRYLQDSHGNPLRIKLGGDGRTIVDLEGTPVVSPDGLPLFGQGRHGTPLANAQDKPILSLGGKPLVGLEVIKKTTHPPTTTMQPTTTTTPLPTTTTPRPTTATTRRTTTTRRTTTRRPTTTVRTTTRTTTTTTPTPTTPIPTCPPGTLERHDDDGNLIMSSNGIPECYAEEDEFSGLETDTAVPTEEAYVIYDEDYEFETSRPPTTTEPSTTATTPRVIPEEGAISSFPEEEFDLAGRKRFVAPYVTYLNKDPSAPCSLTDALDHFQVDSLDEIIPNDLKKSDLPPQHAPRNITVVAVEGCHSFVIVDWDKATPGDVVTGYLVYSASYEDFIRNKWSTQASSVTHLPIENLKPNTRYYFKVQAQNPHGYGPISPSVSFVTESDNPLLVVRPPGGEPIWIPFAFKHDPSYTDCHGRQYVKRTWYRKFVGVVLCNSLRYKIYLSDNLKDTFYSIGDSWGRGEDHCQFVDSHLDGRTGPQSYVEALPTIQGYYRQYRQEPVRFGNIGFGTPYYYVGWYECGVSIPGKW.

Residues 1 to 32 (MAPEAGATLRAPRRLSWAALLLLAALLPVASS) form the signal peptide. The Fibronectin type-III 1 domain occupies 39–131 (HPLKPRHVKL…PVYRAESPPG (93 aa)). Asn149 is a glycosylation site (N-linked (GlcNAc...) asparagine). Fibronectin type-III domains lie at 158 to 258 (PNKP…SEED), 262 to 357 (VPDD…TPES), and 362 to 457 (APEN…MPTT). Disordered regions lie at residues 455 to 500 (PTTS…PQGR), 515 to 1271 (ANGG…TVSP), 1311 to 1350 (LSRQ…IING), and 1444 to 1515 (THPP…CPPG). The segment covering 565–574 (TLRPPSRHGH) has biased composition (basic residues). The span at 614-625 (PSASASPAHHAS) shows a compositional bias: low complexity. A compositionally biased stretch (polar residues) spans 626–641 (TQGTSHRPSLPASLND). 2 stretches are compositionally biased toward low complexity: residues 711–722 (SASAPPSRLSPP) and 759–778 (SRST…TQVS). Ser717 bears the Phosphoserine mark. Over residues 786–799 (GESHGDGDREDGGR) the composition is skewed to basic and acidic residues. Composition is skewed to polar residues over residues 941–957 (KYSS…QSTD) and 1027–1060 (SPSQ…TASS). Residues 1071–1088 (QDEDAQGSYDDDSTEVEA) show a composition bias toward acidic residues. Positions 1166 to 1176 (PLSSKSQQSVS) are enriched in polar residues. The segment covering 1197 to 1209 (SSSVPKWPSSSTP) has biased composition (low complexity). The span at 1211–1226 (GGKDADGSLAKEEREP) shows a compositional bias: basic and acidic residues. Over residues 1445 to 1504 (HPPTTTMQPTTTTTPLPTTTTPRPTTATTRRTTTTRRTTTRRPTTTVRTTTRTTTTTTPT) the composition is skewed to low complexity. The Fibronectin type-III 5 domain occupies 1658–1752 (APRNITVVAV…PSVSFVTESD (95 aa)). N-linked (GlcNAc...) asparagine glycosylation is present at Asn1661.

Almost absent from healthy skin; especially in epidermal keratinocytes, skin fibroblasts or endothelial cells and is barely detectable in benign melanocytic naevi. Expressed in the stroma close to skin tumors, in the tumor cells themselves and in the epidermis of psoriasis.

The protein localises to the secreted. Functionally, may be an activator of G protein signaling. This Homo sapiens (Human) protein is Fibronectin type III domain-containing protein 1 (FNDC1).